Consider the following 293-residue polypeptide: 5'-3' exoribonuclease Rnm (293 aa).

Mn(2+) is bound by residues histidine 17, histidine 19, aspartate 24, histidine 49, glutamate 76, histidine 87, histidine 202, aspartate 259, and histidine 261.

This sequence belongs to the PHP family. TrpH/YciV subfamily. Mn(2+) serves as cofactor.

The enzyme catalyses a ribonucleoside 3',5'-bisphosphate + H2O = a ribonucleoside 5'-phosphate + phosphate. Its function is as follows. Exoribonuclease that catalyzes the last steps of 5S, 16S and 23S rRNA 5'-end maturation. Removes 3 nucleotides (nt) from the 5' end of 5S, 16S and 23S rRNA precursors to generate the mature 5' ends. 5S and 23S rRNA maturation occurs more efficiently and accurately on ribosomal particles as compared to free RNA. Efficiently catalyzes the hydrolysis of the 3'-phosphate from 3',5'-bis-phosphonucleotides as well as the successive hydrolysis of 5'-phosphomononucleotides from the 5'-end of short pieces of RNA and DNA, with no specificity toward the identity of the nucleotide base. Is more efficient at hydrolyzing RNA oligonucleotides than DNA oligonucleotides. This enzyme can also hydrolyze annealed DNA duplexes, albeit at a catalytic efficiency lower than that of the corresponding single-stranded oligonucleotides. The chain is 5'-3' exoribonuclease Rnm from Salmonella typhimurium (strain LT2 / SGSC1412 / ATCC 700720).